The chain runs to 93 residues: Pyrimidine/purine nucleoside phosphorylase (93 aa).

It belongs to the nucleoside phosphorylase PpnP family.

The catalysed reaction is a purine D-ribonucleoside + phosphate = a purine nucleobase + alpha-D-ribose 1-phosphate. It carries out the reaction adenosine + phosphate = alpha-D-ribose 1-phosphate + adenine. The enzyme catalyses cytidine + phosphate = cytosine + alpha-D-ribose 1-phosphate. It catalyses the reaction guanosine + phosphate = alpha-D-ribose 1-phosphate + guanine. The catalysed reaction is inosine + phosphate = alpha-D-ribose 1-phosphate + hypoxanthine. It carries out the reaction thymidine + phosphate = 2-deoxy-alpha-D-ribose 1-phosphate + thymine. The enzyme catalyses uridine + phosphate = alpha-D-ribose 1-phosphate + uracil. It catalyses the reaction xanthosine + phosphate = alpha-D-ribose 1-phosphate + xanthine. Functionally, catalyzes the phosphorolysis of diverse nucleosides, yielding D-ribose 1-phosphate and the respective free bases. Can use uridine, adenosine, guanosine, cytidine, thymidine, inosine and xanthosine as substrates. Also catalyzes the reverse reactions. This Shewanella pealeana (strain ATCC 700345 / ANG-SQ1) protein is Pyrimidine/purine nucleoside phosphorylase.